The following is a 143-amino-acid chain: Ribonuclease P protein component 2 (143 aa).

The protein belongs to the eukaryotic/archaeal RNase P protein component 2 family. Consists of a catalytic RNA component and at least 4-5 protein subunits.

Its subcellular location is the cytoplasm. It carries out the reaction Endonucleolytic cleavage of RNA, removing 5'-extranucleotides from tRNA precursor.. In terms of biological role, part of ribonuclease P, a protein complex that generates mature tRNA molecules by cleaving their 5'-ends. The polypeptide is Ribonuclease P protein component 2 (Saccharolobus islandicus (strain L.S.2.15 / Lassen #1) (Sulfolobus islandicus)).